The primary structure comprises 166 residues: Urease accessory protein UreE (166 aa).

Belongs to the UreE family.

Its subcellular location is the cytoplasm. Its function is as follows. Involved in urease metallocenter assembly. Binds nickel. Probably functions as a nickel donor during metallocenter assembly. The chain is Urease accessory protein UreE from Azotobacter vinelandii (strain DJ / ATCC BAA-1303).